Consider the following 257-residue polypeptide: Diphthine synthase (257 aa).

S-adenosyl-L-methionine contacts are provided by residues Ile11, Asp89, Ile92, 117–118 (SV), Leu169, Leu210, and His235.

Belongs to the diphthine synthase family. As to quaternary structure, homodimer.

It catalyses the reaction 2-[(3S)-amino-3-carboxypropyl]-L-histidyl-[translation elongation factor 2] + 3 S-adenosyl-L-methionine = diphthine-[translation elongation factor 2] + 3 S-adenosyl-L-homocysteine + 3 H(+). It functions in the pathway protein modification; peptidyl-diphthamide biosynthesis. Its function is as follows. S-adenosyl-L-methionine-dependent methyltransferase that catalyzes the trimethylation of the amino group of the modified target histidine residue in translation elongation factor 2 (EF-2), to form an intermediate called diphthine. The three successive methylation reactions represent the second step of diphthamide biosynthesis. The chain is Diphthine synthase from Saccharolobus islandicus (strain L.S.2.15 / Lassen #1) (Sulfolobus islandicus).